Consider the following 432-residue polypeptide: MYYCISFTHKNTDIALREKLSFSNEAKKSEFLKIISTHENIEECLVISTCNRVEIVAFVKMACAEFIVKSLALLCDVDKDILLEKADIFEDSGAIHHLFSVASSLDSLVVGETQIAGQLKDAFAFAVKNNFCGVHLSRAVHSAFKCAAKVRNETQISKNPISVASVAVAKAKELADLAQKKAVVIGAGEMGELAAKHLIAAGAKVIILNRDLQKAKDLCERLGVLSEYDSLENLKKYLNQYEFFFSATNAPNAIITNSLIEELPYKRYFFDIAVPRDIDINENENISVFAVDDLENVVQKNLALREQEARMAYGIIGRETSEFFRYLNDLALMPIIKAIRLQAKEYADKQLEIALKKGYLKKSDKEEARKLIHQVFKAFLHTPTVNLKHLQGKMQSDTVINAMRYVFDLQNNLEGLNQYKCEFDMENNDEIY.

Residues 49–52, Ser-107, 112–114, and Gln-118 contribute to the substrate site; these read TCNR and ETQ. The active-site Nucleophile is Cys-50. 186–191 is an NADP(+) binding site; it reads GAGEMG.

The protein belongs to the glutamyl-tRNA reductase family. In terms of assembly, homodimer.

It catalyses the reaction (S)-4-amino-5-oxopentanoate + tRNA(Glu) + NADP(+) = L-glutamyl-tRNA(Glu) + NADPH + H(+). The protein operates within porphyrin-containing compound metabolism; protoporphyrin-IX biosynthesis; 5-aminolevulinate from L-glutamyl-tRNA(Glu): step 1/2. Functionally, catalyzes the NADPH-dependent reduction of glutamyl-tRNA(Glu) to glutamate 1-semialdehyde (GSA). This Campylobacter jejuni subsp. jejuni serotype O:6 (strain 81116 / NCTC 11828) protein is Glutamyl-tRNA reductase.